A 452-amino-acid polypeptide reads, in one-letter code: Interferon-induced protein 44-like (452 aa).

A TLDc domain is found at M1 to E159.

It belongs to the IFI44 family. In terms of assembly, interacts with FKBP5; this interaction modulates IKBKB and IKBKE kinase activities.

The protein resides in the cytoplasm. Type I interferon-stimulated gene (ISG) that plays a critical role in antiviral and antibacterial activity. During bacterial infection, promotes macrophage differentiation and facilitates inflammatory cytokine secretion. Plays a role in the control of respiratory syncytial virus/RSV infection, reducing the ability of the virus to replicate. Exhibits a low antiviral activity against hepatitis C virus. Also acts as a feedback regulator of IFN responses by negatively regulating IKBKB and IKBKE kinase activities through interaction with FKBP5. This is Interferon-induced protein 44-like (IFI44L) from Homo sapiens (Human).